We begin with the raw amino-acid sequence, 44 residues long: U2-agatoxin-Ao1s (44 aa).

The propeptide occupies 1-9 (KKVYSFLKL). 3 cysteine pairs are disulfide-bonded: cysteine 12–cysteine 28, cysteine 19–cysteine 33, and cysteine 27–cysteine 43.

It belongs to the neurotoxin 01 (U2-agtx) family. Expressed by the venom gland.

It localises to the secreted. In terms of biological role, insect active toxin causing rapid but reversible paralysis in crickets. No activity shown in mammals. Does not show effect on mammalian voltage-gated calcium channels. The sequence is that of U2-agatoxin-Ao1s from Agelena orientalis (Funnel-web spider).